A 270-amino-acid chain; its full sequence is F-actin-capping protein subunit beta (270 aa).

Positions 245–258 (QTRSQKSTTDSQEQ) are enriched in polar residues. Positions 245 to 270 (QTRSQKSTTDSQEQQQKEVIKGLQNL) are disordered.

This sequence belongs to the F-actin-capping protein beta subunit family. Component of the F-actin capping complex, composed of a heterodimer of an alpha and a beta subunit.

It is found in the cytoplasm. It localises to the cytoskeleton. The protein localises to the actin patch. F-actin-capping proteins bind in a Ca(2+)-independent manner to the fast growing ends of actin filaments (barbed end) thereby blocking the exchange of subunits at these ends. Unlike other capping proteins (such as gelsolin and severin), these proteins do not sever actin filaments. The protein is F-actin-capping protein subunit beta (CAP2) of Candida glabrata (strain ATCC 2001 / BCRC 20586 / JCM 3761 / NBRC 0622 / NRRL Y-65 / CBS 138) (Yeast).